The primary structure comprises 1052 residues: Swarming motility protein SwrC (1052 aa).

This sequence belongs to the resistance-nodulation-cell division (RND) (TC 2.A.6) family.

Functionally, required for self-resistance to surfactin, an antimicrobial lipopeptide surfactant produced by B.subtilis. Also required for swarming motility. This is Swarming motility protein SwrC (swrC) from Bacillus subtilis (strain 168).